We begin with the raw amino-acid sequence, 554 residues long: Phenylalanine--tRNA ligase beta subunit (554 aa).

A B5 domain is found at Leu276–Gly351. Mg(2+) contacts are provided by Asp329, Asp335, Glu338, and Glu339.

This sequence belongs to the phenylalanyl-tRNA synthetase beta subunit family. Type 2 subfamily. Tetramer of two alpha and two beta subunits. Requires Mg(2+) as cofactor.

It is found in the cytoplasm. It catalyses the reaction tRNA(Phe) + L-phenylalanine + ATP = L-phenylalanyl-tRNA(Phe) + AMP + diphosphate + H(+). This is Phenylalanine--tRNA ligase beta subunit from Methanococcus maripaludis (strain C6 / ATCC BAA-1332).